Here is a 290-residue protein sequence, read N- to C-terminus: Manganese efflux system protein MneS (290 aa).

6 helical membrane-spanning segments follow: residues L15 to F35, A39 to L61, I82 to A102, T113 to Y133, A159 to I179, and T181 to E201.

It belongs to the cation diffusion facilitator (CDF) transporter (TC 2.A.4) family.

Its subcellular location is the cell membrane. Functionally, secondary manganese efflux system. May prevent manganese intoxication. The chain is Manganese efflux system protein MneS from Bacillus subtilis (strain 168).